The primary structure comprises 291 residues: N-acetylmannosamine kinase (291 aa).

Residues alanine 5–lysine 12 and glycine 132–serine 139 each bind ATP. Histidine 156, cysteine 166, cysteine 168, and cysteine 173 together coordinate Zn(2+).

The protein belongs to the ROK (NagC/XylR) family. NanK subfamily. As to quaternary structure, homodimer.

It carries out the reaction an N-acyl-D-mannosamine + ATP = an N-acyl-D-mannosamine 6-phosphate + ADP + H(+). It functions in the pathway amino-sugar metabolism; N-acetylneuraminate degradation; D-fructose 6-phosphate from N-acetylneuraminate: step 2/5. Its function is as follows. Catalyzes the phosphorylation of N-acetylmannosamine (ManNAc) to ManNAc-6-P. This chain is N-acetylmannosamine kinase, found in Escherichia coli O7:K1 (strain IAI39 / ExPEC).